The chain runs to 250 residues: MSKLFIPYIMGNKDFISNLKVLSDEGADIVEIGLPFSDPVADGPTIMEAGNKAIEEGMNARKILQELKAHKDELKDTKYVLMTYYNIILHYGEEQFIKDCEAAGVYGLIIPDLPFELGEQLKERFKDSSVKIISLIAMTASDDRIQKIAQHADGFIYTVTMNATTGENGQFHPELQSKIEYIQKNADVPVVAGFGIRNPEQVSTLSEFTDGIVIGSEIVKRFANDSETSIRQYLQSIRRALDETKAAANS.

Active-site proton acceptor residues include glutamate 31 and aspartate 42.

This sequence belongs to the TrpA family. In terms of assembly, tetramer of two alpha and two beta chains.

The catalysed reaction is (1S,2R)-1-C-(indol-3-yl)glycerol 3-phosphate + L-serine = D-glyceraldehyde 3-phosphate + L-tryptophan + H2O. The protein operates within amino-acid biosynthesis; L-tryptophan biosynthesis; L-tryptophan from chorismate: step 5/5. The alpha subunit is responsible for the aldol cleavage of indoleglycerol phosphate to indole and glyceraldehyde 3-phosphate. The sequence is that of Tryptophan synthase alpha chain from Staphylococcus carnosus (strain TM300).